The chain runs to 168 residues: Endoribonuclease YbeY (168 aa).

Positions 119, 123, and 129 each coordinate Zn(2+).

This sequence belongs to the endoribonuclease YbeY family. Zn(2+) serves as cofactor.

The protein resides in the cytoplasm. In terms of biological role, single strand-specific metallo-endoribonuclease involved in late-stage 70S ribosome quality control and in maturation of the 3' terminus of the 16S rRNA. This Gluconobacter oxydans (strain 621H) (Gluconobacter suboxydans) protein is Endoribonuclease YbeY.